The chain runs to 288 residues: Elongation factor Ts (288 aa).

The segment at 82 to 85 (TDFV) is involved in Mg(2+) ion dislocation from EF-Tu.

This sequence belongs to the EF-Ts family.

The protein localises to the cytoplasm. Its function is as follows. Associates with the EF-Tu.GDP complex and induces the exchange of GDP to GTP. It remains bound to the aminoacyl-tRNA.EF-Tu.GTP complex up to the GTP hydrolysis stage on the ribosome. In Chlorobium phaeobacteroides (strain BS1), this protein is Elongation factor Ts.